A 427-amino-acid polypeptide reads, in one-letter code: Adenylosuccinate synthetase (427 aa).

Residues 12 to 18 (GDEGKGK) and 40 to 42 (GHT) contribute to the GTP site. Catalysis depends on aspartate 13, which acts as the Proton acceptor. Mg(2+) is bound by residues aspartate 13 and glycine 40. IMP-binding positions include 13 to 16 (DEGK), 38 to 41 (NAGH), threonine 128, arginine 142, glutamine 223, threonine 238, and arginine 302. The Proton donor role is filled by histidine 41. 298-304 (VTTGRAR) is a substrate binding site. Residues arginine 304, 330-332 (KLD), and 412-414 (GVG) each bind GTP.

Belongs to the adenylosuccinate synthetase family. Homodimer. It depends on Mg(2+) as a cofactor.

It localises to the cytoplasm. It carries out the reaction IMP + L-aspartate + GTP = N(6)-(1,2-dicarboxyethyl)-AMP + GDP + phosphate + 2 H(+). It participates in purine metabolism; AMP biosynthesis via de novo pathway; AMP from IMP: step 1/2. In terms of biological role, plays an important role in the de novo pathway of purine nucleotide biosynthesis. Catalyzes the first committed step in the biosynthesis of AMP from IMP. The chain is Adenylosuccinate synthetase from Frankia alni (strain DSM 45986 / CECT 9034 / ACN14a).